We begin with the raw amino-acid sequence, 624 residues long: Probable potassium transport system protein Kup 2 (624 aa).

Helical transmembrane passes span 14–34, 51–71, 97–117, 133–153, 163–183, 211–231, 245–265, 283–303, 335–355, 364–384, 393–413, and 416–436; these read LSFAALGVVFGDIGTSPLYAF, ILSLIFWSLIIIVSIKYLVIV, GGWLLFITLVGIGLIIGDGML, LSPNLAKYVLPVTLIILFFLF, IGVYFAPVMLVWFITIGILGF, SALFILGGVFLVMTGGEALFA, WFAVALPALLLCYFGQGAFVL, FLPVMIILATLATIIASQAII, VYLPLINFILALGTCSLVVIF, AYGIAVNLDMLITTVLVGIIA, FKILIFLLILIIELAFFAGNI, and LLTGGWIPVLIAFLGFVVMYT.

Belongs to the HAK/KUP transporter (TC 2.A.72) family.

Its subcellular location is the cell inner membrane. The catalysed reaction is K(+)(in) + H(+)(in) = K(+)(out) + H(+)(out). Functionally, transport of potassium into the cell. Likely operates as a K(+):H(+) symporter. This is Probable potassium transport system protein Kup 2 from Legionella pneumophila (strain Lens).